The chain runs to 186 residues: Iodotyrosine deiodinase (186 aa).

FMN is bound by residues Arg-11–Arg-15, Pro-38–Ser-39, and Ser-39. 4 residues coordinate 3-iodo-L-tyrosine: Met-41, Glu-68, Tyr-72, and Lys-92. L-tyrosine-binding residues include Met-41, Glu-68, Tyr-72, and Lys-92. Residue Arg-176 participates in FMN binding.

It belongs to the nitroreductase family. As to quaternary structure, homodimer. FMN serves as cofactor.

It carries out the reaction 2 iodide + L-tyrosine + 2 NADP(+) = 3,5-diiodo-L-tyrosine + 2 NADPH + H(+). The catalysed reaction is iodide + L-tyrosine + NADP(+) = 3-iodo-L-tyrosine + NADPH. It catalyses the reaction 3-iodo-L-tyrosine + iodide + NADP(+) = 3,5-diiodo-L-tyrosine + NADPH + H(+). The enzyme catalyses L-tyrosine + chloride + NADP(+) = 3-chloro-L-tyrosine + NADPH. It carries out the reaction bromide + L-tyrosine + NADP(+) = 3-bromo-L-tyrosine + NADPH. Catalyzes the dehalogenation of halotyrosines such as 3-bromo-L-tyrosine, 3-chloro-L-tyrosine, 3-iodo-L-tyrosine and 3,5-diiodo-L-tyrosine. Activity towards 2-iodophenol is weak. This chain is Iodotyrosine deiodinase, found in Thermotoga neapolitana (strain ATCC 49049 / DSM 4359 / NBRC 107923 / NS-E).